The following is a 258-amino-acid chain: Small ribosomal subunit protein mS23 (258 aa).

The protein belongs to the mitochondrion-specific ribosomal protein mS23 family. Component of the mitochondrial small ribosomal subunit.

It is found in the mitochondrion. This Aspergillus fumigatus (strain ATCC MYA-4609 / CBS 101355 / FGSC A1100 / Af293) (Neosartorya fumigata) protein is Small ribosomal subunit protein mS23 (rsm25).